A 472-amino-acid chain; its full sequence is Coronin-6 (472 aa).

6 WD repeats span residues 23–64, 72–111, 122–161, 165–204, 210–251, and 256–296; these read QAYE…VLPL, KNYPLVTGHTAPVLDIDWCPHNDNVIASASDDTTIMVWQI, EPIITLEGHSKRVGILSWHPTARNVLLSAGGDNVIIIWNV, EVLLSLDDMHPDVIHSVCWNSNGSLLATTCKDKTLRIIDP, VAEQ…LWDP, and EPVA…YFEI. Positions 407 to 433 are disordered; the sequence is KRNILDVRPPSGPRRSQSASDAPLSQQ. Residues 420-433 show a composition bias toward polar residues; the sequence is RRSQSASDAPLSQQ. A coiled-coil region spans residues 430 to 464; that stretch reads LSQQHTLETLLEEIKALRERVQAQEQRITALENML.

The sequence is that of Coronin-6 (CORO6) from Homo sapiens (Human).